The following is a 97-amino-acid chain: Putative ankyrin repeat protein RBE_0357 (97 aa).

One copy of the ANK repeat lies at 24 to 54; that stretch reads YGKTALHYAYTKRNIDIIKILLKCPGIKICI.

The polypeptide is Putative ankyrin repeat protein RBE_0357 (Rickettsia bellii (strain RML369-C)).